A 33-amino-acid chain; its full sequence is Kappa-sparatoxin-Hv1a (33 aa).

Disulfide bonds link C2–C17, C9–C22, and C16–C27. W33 carries the tryptophan amide modification.

In terms of tissue distribution, expressed by the venom gland.

It is found in the secreted. Its function is as follows. Blocks transient outward voltage-gated potassium channels in rat ventricular myocytes (thus prolonging action-potential duration) and rat Kv4.2/KCNA4 channels expressed in Xenopus oocytes. Is also a weak blocker of calcium channels in rat cerebellar granule cells. In Heteropoda venatoria (Brown huntsman spider), this protein is Kappa-sparatoxin-Hv1a.